A 269-amino-acid chain; its full sequence is MKKIISLALALALSASAAELKMATTTSTDNTGLLDALKPLYEKESGNTLKWVAVGTGAALKMGEDCNADVLFVHSPKAEKEFMKKGFGVDRTPVMYNDFIIIADKSLASKFKGKNLKESLELIKNEKLTFISRGDKSGTDNKEKSLWKNLGGVPEKQSWYQQSGQGMLASIKIAEEKKGVILTDRGTYIKYEANEKGKPNLVIVNEGDDSLKNFYSVIATNPKHCKNVNYTEASKFIKWVTSDKTLNFIADFKLLNKPLFVIDAKTRKD.

Residues 1–17 (MKKIISLALALALSASA) form the signal peptide.

As to quaternary structure, the complex is composed of two ATP-binding proteins (TupC), two transmembrane proteins (TupB) and a solute-binding protein (TupA).

It is found in the periplasm. Its function is as follows. Part of an ABC transporter complex involved in ultra-high affinity tungstate uptake. Specifically binds tungstate. This Campylobacter jejuni subsp. jejuni serotype O:2 (strain ATCC 700819 / NCTC 11168) protein is Tungstate-binding protein TupA.